The chain runs to 710 residues: TRP-like ion channel pkd2 (710 aa).

Residues 1–23 (MRLWRSPLLLLVVVVELFSWADA) form the signal peptide. Helical transmembrane passes span 173-193 (WVMC…SPVL), 197-217 (ALWE…IQAL), 322-342 (FFAT…LVAM), 376-396 (FFYR…MWEI), 404-424 (LAFL…YAFV), 466-486 (FFYF…FIGF), 492-512 (KVQG…MVIL), 525-545 (IGVA…CQAF), and 555-575 (IGII…LGIF). Ser-599 and Ser-632 each carry phosphoserine. The disordered stretch occupies residues 689–710 (RISENNNNAERRRKPLPNNAFR).

The protein belongs to the transient receptor potential (TRP) ion channel family. Interacts with rho1.

Its subcellular location is the cell membrane. It is found in the golgi apparatus membrane. In terms of biological role, acts as a key signaling component in the regulation of cell shape and cell wall synthesis through interaction with GTPase Rho1. The chain is TRP-like ion channel pkd2 (pkd2) from Schizosaccharomyces pombe (strain 972 / ATCC 24843) (Fission yeast).